The primary structure comprises 207 residues: Hepatic lectin (207 aa).

Methionine 1 is modified (N-acetylmethionine). Residues 1-23 lie on the Cytoplasmic side of the membrane; it reads MDEERLSDNVRLYKGGSIRQGLR. Residues 24 to 48 traverse the membrane as a helical; Signal-anchor for type II membrane protein segment; that stretch reads SFAAVYVLLALSFLLLTLLSSVSLA. Over 49-207 the chain is Extracellular; the sequence is RIAALSSKLS…YYVCEKPLPK (159 aa). The N-linked (GlcNAc...) asparagine glycan is linked to asparagine 67. The region spanning 77 to 203 is the C-type lectin domain; it reads PCGAQSRQWE…TYECYYVCEK (127 aa). 3 cysteine pairs are disulfide-bonded: cysteine 78-cysteine 92, cysteine 109-cysteine 201, and cysteine 179-cysteine 193.

Post-translationally, some or all of the cysteines are involved in disulfide bonds.

Its subcellular location is the membrane. Functionally, hepatic lectin is a membrane receptor protein that recognizes and binds exposed N-acetylglucosamine moieties of plasma glycoproteins, thus mediating their clearance (from the circulation) and endocytosis. The polypeptide is Hepatic lectin (Gallus gallus (Chicken)).